Here is a 434-residue protein sequence, read N- to C-terminus: ATP-dependent RNA helicase RhlB (434 aa).

Residues Q9–A37 carry the Q motif motif. The region spanning L40–V219 is the Helicase ATP-binding domain. A53–T60 lines the ATP pocket. A DEAD box motif is present at residues D165 to D168. A Helicase C-terminal domain is found at A245 to L390. The tract at residues P394–A434 is disordered. Low complexity predominate over residues N406–S418. Basic residues predominate over residues G419–P428.

It belongs to the DEAD box helicase family. RhlB subfamily. As to quaternary structure, component of the RNA degradosome, which is a multiprotein complex involved in RNA processing and mRNA degradation.

It is found in the cytoplasm. It catalyses the reaction ATP + H2O = ADP + phosphate + H(+). In terms of biological role, DEAD-box RNA helicase involved in RNA degradation. Has RNA-dependent ATPase activity and unwinds double-stranded RNA. The polypeptide is ATP-dependent RNA helicase RhlB (Aliivibrio salmonicida (strain LFI1238) (Vibrio salmonicida (strain LFI1238))).